The chain runs to 307 residues: MDSAAQSNQAQSVFGQTGTARVKRGMAEMLKGGVIMDVVIPEQARIAEGSGAVAVMALERVPSDIRAQGGVSRMSDPDMIESIIAAVTIPVMAKARIGHFVEAQILQSLGVDYIDESEVLTPADYTHHIDKWKFTVPFVCGATNLGEALRRINEGAAMIRSKGEAGTGDVSNATTHMRAIAGDIRRLTSLSEDELYVAAKELHAPYELVIEVARTNKLPVTLFTAGGIATPADAAMMMQLGAEGIFVGSGIFKSSDPAQRAAAIVKATTFYDDPDVLAKVSRGLGEAMAGIDVEQIAQPDRLAQRGW.

D37 contributes to the D-ribose 5-phosphate binding site. The active-site Schiff-base intermediate with D-ribose 5-phosphate is the K94. Position 166 (G166) interacts with D-ribose 5-phosphate. R178 contributes to the D-glyceraldehyde 3-phosphate binding site. D-ribose 5-phosphate contacts are provided by residues G227 and 248-249 (GS).

It belongs to the PdxS/SNZ family. As to quaternary structure, in the presence of PdxT, forms a dodecamer of heterodimers.

The enzyme catalyses aldehydo-D-ribose 5-phosphate + D-glyceraldehyde 3-phosphate + L-glutamine = pyridoxal 5'-phosphate + L-glutamate + phosphate + 3 H2O + H(+). It functions in the pathway cofactor biosynthesis; pyridoxal 5'-phosphate biosynthesis. Catalyzes the formation of pyridoxal 5'-phosphate from ribose 5-phosphate (RBP), glyceraldehyde 3-phosphate (G3P) and ammonia. The ammonia is provided by the PdxT subunit. Can also use ribulose 5-phosphate and dihydroxyacetone phosphate as substrates, resulting from enzyme-catalyzed isomerization of RBP and G3P, respectively. This is Pyridoxal 5'-phosphate synthase subunit PdxS from Mycobacterium leprae (strain Br4923).